Here is a 300-residue protein sequence, read N- to C-terminus: B1 kinase (300 aa).

The 267-residue stretch at 16–282 folds into the Protein kinase domain; that stretch reads WVVGPLIGKG…ITMVNSLTYF (267 aa). Residues 22 to 30 and Lys-45 each bind ATP; that span reads IGKGGFGSI. Asp-147 acts as the Proton acceptor in catalysis.

It belongs to the protein kinase superfamily. Ser/Thr protein kinase family. Poxviruses subfamily. Interacts with host JIP1; this interaction increases the amount of MAPK bound to JIP1 and subsequently increases the activity of transcription factors, such as JUN, that respond to these complexes. Interacts with protein OPG198; this interaction inhibits the repressive activity of OPG198 pseudokinase on viral replication factory formation. Mg(2+) is required as a cofactor. Autophosphorylated.

Its subcellular location is the virion. It is found in the host cytoplasm. It catalyses the reaction L-seryl-[protein] + ATP = O-phospho-L-seryl-[protein] + ADP + H(+). The enzyme catalyses L-threonyl-[protein] + ATP = O-phospho-L-threonyl-[protein] + ADP + H(+). Essential serine/threonine-protein kinase that plays different role in the viral life cycle. Phosphorylates the host small ribosomal protein RACK1 thereby customizing the ribosomes to a state optimal for viral mRNAs (which contain poly-A leaders) but not for host mRNAs. Facilitates viral DNA replication by inhibiting host BANF1, a cellular host defense responsive to foreign DNA. Phosphorylates host BANF1 on serine and threonine residues; this leads to BANF1 relocalization to the cytoplasm, loss of dimerization and impaired DNA binding activity. Indeed, BANF1 activity depends on its DNA-binding property which is blocked by VPK1-mediated phosphorylation. Required for viral intermediate genes expression, probably by inhibiting host BANF1. Modulates cellular responses via host JUN by two different mechanisms, either by direct phosphorylation or by modulation of upstream JIP1-MAPK complexes. Seems to participate in the accumulation/processing of late proteins and thus in virion maturation. In addition, inhibits B12 repressive activity on viral DNA replication via a phosphorylation-dependent mechanism. The polypeptide is B1 kinase (OPG187) (Homo sapiens (Human)).